We begin with the raw amino-acid sequence, 361 residues long: Chitinase-3-like protein 1 (361 aa).

Positions 1–361 (YKLICYYTSW…SAVKDVLAEV (361 aa)) constitute a GH18 domain. Cysteines 5 and 30 form a disulfide. N-linked (GlcNAc...) asparagine glycosylation occurs at Asn-39. Chitin-binding positions include 49-50 (EW), 76-79 (GGWN), Tyr-120, 183-186 (LTYD), and Arg-241. A disulfide bridge links Cys-278 with Cys-342. The segment at 302 to 316 (QWVAYDDQESVKNKA) is important for AKT1 activation and IL8 production. Trp-330 contacts chitin. The N-linked (GlcNAc...) asparagine glycan is linked to Asn-345.

This sequence belongs to the glycosyl hydrolase 18 family. In terms of assembly, monomer. Detected in mammary gland.

It is found in the secreted. The protein localises to the extracellular space. It localises to the cytoplasm. Its subcellular location is the perinuclear region. The protein resides in the endoplasmic reticulum. Functionally, carbohydrate-binding lectin with a preference for chitin. Has no chitinase activity. May play a role in tissue remodeling and in the capacity of cells to respond to and cope with changes in their environment. Plays a role in T-helper cell type 2 (Th2) inflammatory response and IL-13-induced inflammation, regulating allergen sensitization, inflammatory cell apoptosis, dendritic cell accumulation and M2 macrophage differentiation. Facilitates invasion of pathogenic enteric bacteria into colonic mucosa and lymphoid organs. Mediates activation of AKT1 signaling pathway and subsequent IL8 production in colonic epithelial cells. Regulates antibacterial responses in lung by contributing to macrophage bacterial killing, controlling bacterial dissemination and augmenting host tolerance. Also regulates hyperoxia-induced injury, inflammation and epithelial apoptosis in lung. This is Chitinase-3-like protein 1 (CHI3L1) from Ovis aries (Sheep).